A 28-amino-acid polypeptide reads, in one-letter code: Metallothionein-like protein type 2 LSC210 (28 aa).

Belongs to the metallothionein superfamily. Type 15 family.

Functionally, metallothioneins have a high content of cysteine residues that bind various heavy metals. The sequence is that of Metallothionein-like protein type 2 LSC210 (LSC210) from Brassica napus (Rape).